A 316-amino-acid chain; its full sequence is Acetyl-coenzyme A carboxylase carboxyl transferase subunit alpha (316 aa).

Residues 36-290 form the CoA carboxyltransferase C-terminal domain; sequence LLEERLARLR…KEALLKALEE (255 aa).

Belongs to the AccA family. In terms of assembly, acetyl-CoA carboxylase is a heterohexamer composed of biotin carboxyl carrier protein (AccB), biotin carboxylase (AccC) and two subunits each of ACCase subunit alpha (AccA) and ACCase subunit beta (AccD).

It localises to the cytoplasm. The catalysed reaction is N(6)-carboxybiotinyl-L-lysyl-[protein] + acetyl-CoA = N(6)-biotinyl-L-lysyl-[protein] + malonyl-CoA. It functions in the pathway lipid metabolism; malonyl-CoA biosynthesis; malonyl-CoA from acetyl-CoA: step 1/1. Component of the acetyl coenzyme A carboxylase (ACC) complex. First, biotin carboxylase catalyzes the carboxylation of biotin on its carrier protein (BCCP) and then the CO(2) group is transferred by the carboxyltransferase to acetyl-CoA to form malonyl-CoA. This chain is Acetyl-coenzyme A carboxylase carboxyl transferase subunit alpha, found in Thermus thermophilus (strain ATCC 27634 / DSM 579 / HB8).